A 249-amino-acid polypeptide reads, in one-letter code: MDELSTSPYQFRRTQSCRVTNKGPNGLARRGTQRGCSRSKSTRRGNLGTIASLTFSQKQALNLSWRLLKPQASACFRKIFLELEIASPKVKQIFYKAALVDAFNKDDDNSATMEVHIKLTTKFFDELLVSLDDETEFVNKIRGIGSAHAILAKGSNFSSDIWERLGEIAMERVCSHEVVTKTREASRAWRTLIAILIDELRGGFEGELRQHRKSSSTDQIEMGKMEDEEELHAKLQQLRMDYNQTLPYT.

A disordered region spans residues 20 to 43 (TNKGPNGLARRGTQRGCSRSKSTR). The 154-residue stretch at 52–205 (SLTFSQKQAL…LIDELRGGFE (154 aa)) folds into the Globin domain. 2 residues coordinate heme: histidine 116 and histidine 148.

It belongs to the globin family.

The sequence is that of Globin-like protein 9 (glb-9) from Caenorhabditis elegans.